The primary structure comprises 85 residues: Small ribosomal subunit protein bS16 (85 aa).

It belongs to the bacterial ribosomal protein bS16 family.

The polypeptide is Small ribosomal subunit protein bS16 (Pseudomonas savastanoi pv. phaseolicola (strain 1448A / Race 6) (Pseudomonas syringae pv. phaseolicola (strain 1448A / Race 6))).